The chain runs to 141 residues: Large ribosomal subunit protein bL17 (141 aa).

This sequence belongs to the bacterial ribosomal protein bL17 family. In terms of assembly, part of the 50S ribosomal subunit. Contacts protein L32.

This chain is Large ribosomal subunit protein bL17, found in Chlamydia trachomatis serovar D (strain ATCC VR-885 / DSM 19411 / UW-3/Cx).